We begin with the raw amino-acid sequence, 147 residues long: Small ribosomal subunit protein uS5 (147 aa).

The 64-residue stretch at 9 to 72 (FEEVIVDIGR…DDAFKNIIHV (64 aa)) folds into the S5 DRBM domain.

Belongs to the universal ribosomal protein uS5 family. As to quaternary structure, part of the 30S ribosomal subunit. Contacts proteins S4 and S8.

In terms of biological role, with S4 and S12 plays an important role in translational accuracy. Located at the back of the 30S subunit body where it stabilizes the conformation of the head with respect to the body. The protein is Small ribosomal subunit protein uS5 of Campylobacter concisus (strain 13826).